The primary structure comprises 501 residues: Ribose import ATP-binding protein RbsA 1 (501 aa).

2 consecutive ABC transporter domains span residues 5-241 (LQLK…VGRK) and 252-495 (APGD…VGKL). Residue 37–44 (GENGAGKS) coordinates ATP.

Belongs to the ABC transporter superfamily. Ribose importer (TC 3.A.1.2.1) family. In terms of assembly, the complex is composed of an ATP-binding protein (RbsA), two transmembrane proteins (RbsC) and a solute-binding protein (RbsB).

The protein resides in the cell inner membrane. It carries out the reaction D-ribose(out) + ATP + H2O = D-ribose(in) + ADP + phosphate + H(+). In terms of biological role, part of the ABC transporter complex RbsABC involved in ribose import. Responsible for energy coupling to the transport system. The polypeptide is Ribose import ATP-binding protein RbsA 1 (Escherichia coli O157:H7).